The sequence spans 77 residues: Small ribosomal subunit protein uS17 (77 aa).

It belongs to the universal ribosomal protein uS17 family. Part of the 30S ribosomal subunit.

One of the primary rRNA binding proteins, it binds specifically to the 5'-end of 16S ribosomal RNA. The sequence is that of Small ribosomal subunit protein uS17 from Wolbachia sp. subsp. Brugia malayi (strain TRS).